Consider the following 371-residue polypeptide: MSRNLYYTGPPKFIIKGIMNSTALPQEIQNLTRARFADWLNAHNIAPYRADQVFKWLFVHRAESFDQMTNISKPVRTLLAESFIIGRLKIARTQQSADGTRKYLFELSDGEHIESVLIPEEDHFTLCVSTQVGCAQGCAFCMTAKKGFVRNLTPAEITGQVLGALKTLAPEERLTNIVLMGMGEPLANYDNVITSLDTICDGDCGLQFSTRRVTLSTSGLVPRMAPLGLATTVNLAVSLNATDNKTRDMLMPINKTYPIEVLLEACRTYPLSNRRKITFEYILMAGVNDSEKDALRLVKLLRSIKAKVNLIPFNEHEGAAFKRPDDAAIERFKQILHDRQYTVMTRQSKGADISAACGQLAADIKKYGQNK.

E114 acts as the Proton acceptor in catalysis. The Radical SAM core domain maps to 120-352 (EEDHFTLCVS…VMTRQSKGAD (233 aa)). Residues C127 and C357 are joined by a disulfide bond. C134, C138, and C141 together coordinate [4Fe-4S] cluster. S-adenosyl-L-methionine-binding positions include 183 to 184 (GE), S216, 238 to 240 (SLN), and N314. C357 acts as the S-methylcysteine intermediate in catalysis.

The protein belongs to the radical SAM superfamily. RlmN family. Requires [4Fe-4S] cluster as cofactor.

The protein resides in the cytoplasm. It catalyses the reaction adenosine(2503) in 23S rRNA + 2 reduced [2Fe-2S]-[ferredoxin] + 2 S-adenosyl-L-methionine = 2-methyladenosine(2503) in 23S rRNA + 5'-deoxyadenosine + L-methionine + 2 oxidized [2Fe-2S]-[ferredoxin] + S-adenosyl-L-homocysteine. The enzyme catalyses adenosine(37) in tRNA + 2 reduced [2Fe-2S]-[ferredoxin] + 2 S-adenosyl-L-methionine = 2-methyladenosine(37) in tRNA + 5'-deoxyadenosine + L-methionine + 2 oxidized [2Fe-2S]-[ferredoxin] + S-adenosyl-L-homocysteine. Specifically methylates position 2 of adenine 2503 in 23S rRNA and position 2 of adenine 37 in tRNAs. m2A2503 modification seems to play a crucial role in the proofreading step occurring at the peptidyl transferase center and thus would serve to optimize ribosomal fidelity. This Desulfosudis oleivorans (strain DSM 6200 / JCM 39069 / Hxd3) (Desulfococcus oleovorans) protein is Dual-specificity RNA methyltransferase RlmN.